We begin with the raw amino-acid sequence, 367 residues long: Phosphoribosylaminoimidazole-succinocarboxamide synthase (367 aa).

This sequence belongs to the SAICAR synthetase family.

The catalysed reaction is 5-amino-1-(5-phospho-D-ribosyl)imidazole-4-carboxylate + L-aspartate + ATP = (2S)-2-[5-amino-1-(5-phospho-beta-D-ribosyl)imidazole-4-carboxamido]succinate + ADP + phosphate + 2 H(+). It participates in purine metabolism; IMP biosynthesis via de novo pathway; 5-amino-1-(5-phospho-D-ribosyl)imidazole-4-carboxamide from 5-amino-1-(5-phospho-D-ribosyl)imidazole-4-carboxylate: step 1/2. This chain is Phosphoribosylaminoimidazole-succinocarboxamide synthase, found in Shewanella sp. (strain W3-18-1).